Reading from the N-terminus, the 165-residue chain is Large ribosomal subunit protein uL11 (165 aa).

It belongs to the universal ribosomal protein uL11 family. In terms of assembly, part of the ribosomal stalk of the 50S ribosomal subunit. Interacts with L10 and the large rRNA to form the base of the stalk. L10 forms an elongated spine to which L12 dimers bind in a sequential fashion forming a multimeric L10(L12)X complex.

In terms of biological role, forms part of the ribosomal stalk which helps the ribosome interact with GTP-bound translation factors. This Thermococcus kodakarensis (strain ATCC BAA-918 / JCM 12380 / KOD1) (Pyrococcus kodakaraensis (strain KOD1)) protein is Large ribosomal subunit protein uL11.